A 1235-amino-acid chain; its full sequence is JNK-interacting protein 3 (1235 aa).

Residues 1–22 (MMDNDDALLNNGGPQSGAETVY) are disordered. The 89-residue stretch at 25–113 (EDNNMVMSEK…VTQYEREKSA (89 aa)) folds into the RH1 domain. Residues 84–184 (RINQEQDVEL…NKLHERYTEL (101 aa)) are a coiled coil. A disordered region spans residues 278–325 (GAATDSLQQQHQATSPQSPPDTSPVVPNVPPANVGRSTTKKEQRSDNN). Polar residues predominate over residues 282–293 (DSLQQQHQATSP). Pro residues predominate over residues 294–307 (QSPPDTSPVVPNVP). A coiled-coil region spans residues 366 to 493 (GKEVENLIME…AVRLTEILRA (128 aa)). The region spanning 456–526 (RKRFTRVEMA…TPSNRPTERI (71 aa)) is the RH2 domain. Disordered regions lie at residues 520 to 572 (NRPT…MHPA), 813 to 852 (KPKS…PVNA), and 869 to 897 (PGAP…STGS). The segment covering 529–543 (GLGGGPMFRNTGGGS) has biased composition (gly residues). Composition is skewed to low complexity over residues 544–555 (PAHSHGSPSRGS) and 821–830 (NSNSKPQQQQ). The span at 874–897 (RLSSGNSGSDGNQANNNNSSSTGS) shows a compositional bias: polar residues.

Belongs to the JIP scaffold family. As to quaternary structure, forms homo- and heterooligomeric complexes. Binds the TPR motif-containing C-terminal of kinesin light chain, Klc. Pre-assembled syd scaffolding complexes are then transported as a cargo of kinesin, to the required subcellular location.

The protein localises to the cytoplasm. Its function is as follows. The JNK-interacting protein (JIP) group of scaffold proteins selectively mediates JNK-signaling by aggregating specific components of the MAPK cascade to form a functional JNK signaling module. May function as a regulator of vesicle transport, through interactions with the JNK-signaling components and motor proteins. Syd is required for efficient kinesin-I mediated axonal transport. In Drosophila pseudoobscura pseudoobscura (Fruit fly), this protein is JNK-interacting protein 3.